Here is a 264-residue protein sequence, read N- to C-terminus: NAD-capped RNA hydrolase NudC (264 aa).

Arg-70 is a binding site for substrate. Residues Cys-99 and Cys-102 each contribute to the Zn(2+) site. Glu-112 provides a ligand contact to substrate. Residues Cys-117 and Cys-122 each contribute to the Zn(2+) site. Residue Tyr-127 participates in substrate binding. The region spanning 128 to 257 (PVICPSIIVA…TIALKLINAT (130 aa)) is the Nudix hydrolase domain. Ala-166, Glu-182, and Glu-186 together coordinate a divalent metal cation. The Nudix box motif lies at 167–188 (GFVEIGESFEQTVEREVFEETG). 200-207 (QPWAFPNS) serves as a coordination point for substrate. A divalent metal cation is bound at residue Glu-227. A substrate-binding site is contributed by Ala-250.

It belongs to the Nudix hydrolase family. NudC subfamily. Homodimer. The cofactor is Mg(2+). Requires Mn(2+) as cofactor. Zn(2+) serves as cofactor.

It catalyses the reaction a 5'-end NAD(+)-phospho-ribonucleoside in mRNA + H2O = a 5'-end phospho-adenosine-phospho-ribonucleoside in mRNA + beta-nicotinamide D-ribonucleotide + 2 H(+). The catalysed reaction is NAD(+) + H2O = beta-nicotinamide D-ribonucleotide + AMP + 2 H(+). The enzyme catalyses NADH + H2O = reduced beta-nicotinamide D-ribonucleotide + AMP + 2 H(+). Functionally, mRNA decapping enzyme that specifically removes the nicotinamide adenine dinucleotide (NAD) cap from a subset of mRNAs by hydrolyzing the diphosphate linkage to produce nicotinamide mononucleotide (NMN) and 5' monophosphate mRNA. The NAD-cap is present at the 5'-end of some mRNAs and stabilizes RNA against 5'-processing. Has preference for mRNAs with a 5'-end purine. Catalyzes the hydrolysis of a broad range of dinucleotide pyrophosphates. The polypeptide is NAD-capped RNA hydrolase NudC (Actinobacillus succinogenes (strain ATCC 55618 / DSM 22257 / CCUG 43843 / 130Z)).